Here is a 69-residue protein sequence, read N- to C-terminus: Putative membrane protein insertion efficiency factor (69 aa).

This sequence belongs to the UPF0161 family.

It localises to the cell membrane. In terms of biological role, could be involved in insertion of integral membrane proteins into the membrane. The polypeptide is Putative membrane protein insertion efficiency factor (Alkaliphilus metalliredigens (strain QYMF)).